We begin with the raw amino-acid sequence, 759 residues long: MTQDKCPFKEQSSQPNFAGGGTSNKDWWPDRLKLNILRQHTAVSNPLDADFDYAAAFNSLDYEGLKKDLRALMTDSQDWWPADFGHYGGLFIRMAWHSAGTYRVFDGRGGAGQGQQRFAPLNSWPDNVSLDKARRLLWPIKQKYGNKISWADLLILTGNVALESMGFKTFGFAGGRPDTWEADEATYWGRETTWLGNDARYAKGFSGSDKRGSLIADEESHKTTHSRELETPLAAAHMGLIYVNPEGPDGNPDPVAAAHDIRDTFGRMAMNDEETVALIAGGHTFGKTHGAAPADNVGKEPEAAGLEAQGLGWANKHGSGKGPHTITSGLEVTWTKTPTQWNNNFLEYLFKFEWELTKSPAGAHQWVAKNADEIIPDAYDASKKHKPTMLTTDLSLRFDPAYEKIARRFLEHPDQFADAFARAWFKLTHRDMGPRARYLGPEVPSEVLIWQDPIPAVNHPLVDASDIAALKDEILASGVPPRSFISTAWAAASTFRGSDKRGGANGARIRLAPQRDWEVNNQPWLREALSALEAVQSRFNARGDSKKVSLADLIVLAGCAAVEKAAQDAGHPIKVPFVPGRMDASQEETDVQSFNHMEPFADGFRNFAKGPARPRAEHYLVDKAQLLNLSAPEMTVLVGGLRVLNTNYDGSTHGVFTSRPGALTNDFFVHLLDMNTAWKDVGNGELFEGSDRKTGGKKWTATRADLVFGSNAELRAIAEVYASNDGDMKFVKDFVAAWNKVMNLDRFDLKGKQTIPARL.

Residues 1–24 (MTQDKCPFKEQSSQPNFAGGGTSN) form a disordered region. The segment at residues 96–242 (WHSAGTYRVF…LAAAHMGLIY (147 aa)) is a cross-link (tryptophyl-tyrosyl-methioninium (Trp-Tyr) (with M-268)). H97 functions as the Proton acceptor in the catalytic mechanism. Positions 242–268 (YVNPEGPDGNPDPVAAAHDIRDTFGRM) form a cross-link, tryptophyl-tyrosyl-methioninium (Tyr-Met) (with W-96). Heme b is bound at residue H283.

The protein belongs to the peroxidase family. Peroxidase/catalase subfamily. In terms of assembly, homodimer or homotetramer. Heme b serves as cofactor. In terms of processing, formation of the three residue Trp-Tyr-Met cross-link is important for the catalase, but not the peroxidase activity of the enzyme.

It is found in the cytoplasm. It catalyses the reaction H2O2 + AH2 = A + 2 H2O. The enzyme catalyses 2 H2O2 = O2 + 2 H2O. Functionally, bifunctional enzyme with both catalase and broad-spectrum peroxidase activity. This chain is Catalase-peroxidase, found in Aspergillus fumigatus (strain CBS 144.89 / FGSC A1163 / CEA10) (Neosartorya fumigata).